The sequence spans 232 residues: Phosphoribosylformylglycinamidine synthase subunit PurQ (232 aa).

Positions 3–232 (FAVIVFPGSN…SLVASALAVV (230 aa)) constitute a Glutamine amidotransferase type-1 domain. The Nucleophile role is filled by Cys-86. Catalysis depends on residues His-203 and Glu-205.

Part of the FGAM synthase complex composed of 1 PurL, 1 PurQ and 2 PurS subunits.

The protein resides in the cytoplasm. The enzyme catalyses N(2)-formyl-N(1)-(5-phospho-beta-D-ribosyl)glycinamide + L-glutamine + ATP + H2O = 2-formamido-N(1)-(5-O-phospho-beta-D-ribosyl)acetamidine + L-glutamate + ADP + phosphate + H(+). It catalyses the reaction L-glutamine + H2O = L-glutamate + NH4(+). The protein operates within purine metabolism; IMP biosynthesis via de novo pathway; 5-amino-1-(5-phospho-D-ribosyl)imidazole from N(2)-formyl-N(1)-(5-phospho-D-ribosyl)glycinamide: step 1/2. In terms of biological role, part of the phosphoribosylformylglycinamidine synthase complex involved in the purines biosynthetic pathway. Catalyzes the ATP-dependent conversion of formylglycinamide ribonucleotide (FGAR) and glutamine to yield formylglycinamidine ribonucleotide (FGAM) and glutamate. The FGAM synthase complex is composed of three subunits. PurQ produces an ammonia molecule by converting glutamine to glutamate. PurL transfers the ammonia molecule to FGAR to form FGAM in an ATP-dependent manner. PurS interacts with PurQ and PurL and is thought to assist in the transfer of the ammonia molecule from PurQ to PurL. This is Phosphoribosylformylglycinamidine synthase subunit PurQ from Gloeobacter violaceus (strain ATCC 29082 / PCC 7421).